A 352-amino-acid chain; its full sequence is Minor capsid protein VP2 (352 aa).

Residue glycine 2 is the site of N-myristoyl glycine; by host attachment. Residues serine 273 to proline 308 form a D1 region. A helical membrane pass occupies residues isoleucine 290–leucine 310. The segment at alanine 312–serine 352 is disordered. Residues tyrosine 313–serine 352 form a DNA-binding region. The Nuclear localization signal signature appears at alanine 316–methionine 324. Residues serine 342–serine 352 are compositionally biased toward basic residues.

It belongs to the polyomaviruses capsid protein VP2 family. As to quaternary structure, forms homooligomers, and heterooligomers with VP3 in the endoplasmic reticulum membrane. Interacts (via D1 domain) with VP1. In terms of assembly, interacts (via D1 domain) with VP1.

It localises to the virion. Its subcellular location is the host nucleus. It is found in the host endoplasmic reticulum. The protein resides in the host endoplasmic reticulum membrane. Structural protein that resides within the core of the capsid surrounded by 72 VP1 pentamers. Participates in host cell receptor binding together with VP1. Following virus endocytosis and trafficking to the endoplasmic reticulum, VP2 and VP3 form oligomers and integrate into the endoplasmic reticulum membrane. Heterooligomer VP2-VP3 may create a viroporin for transporting the viral genome across the endoplasmic reticulum membrane to the cytoplasm. Nuclear entry of the viral DNA involves the selective exposure and importin recognition of VP2 or VP3 nuclear localization signal (shared C-terminus). Plays a role in virion assembly within the nucleus in particular through a DNA-binding domain located in the C-terminal region. An N-terminal myristoylation suggests a scaffold function for virion assembly. In terms of biological role, structural protein that resides within the core of the capsid surrounded by 72 VP1 pentamers. Following virus endocytosis and trafficking to the endoplasmic reticulum, VP2 and VP3 form oligomers and integrate into the endoplasmic reticulum membrane. Heterooligomer VP2-VP3 may create a viroporin for transporting the viral genome across the endoplasmic reticulum membrane to the cytoplasm. Nuclear entry of the viral DNA involves the selective exposure and importin recognition of VP2 or VP3 nuclear localization signal (shared C-terminus). Plays a role in virion assembly within the nucleus. May participate in host cell lysis when associated with VP4. Its function is as follows. Viroporin inducing perforation of cellular membranes to trigger virus progeny release. Forms pores of 3 nm inner diameter. VP4 is expressed about 24 hours after the late structural proteins and is not incorporated into the mature virion. The sequence is that of Minor capsid protein VP2 from Simian virus 12 (strain wt100) (SV-12).